A 1438-amino-acid polypeptide reads, in one-letter code: DNA polymerase III PolC-type (1438 aa).

In terms of domain architecture, Exonuclease spans 422 to 578; that stretch reads YVVFDVETTG…YDTEATAYIF (157 aa).

Belongs to the DNA polymerase type-C family. PolC subfamily.

Its subcellular location is the cytoplasm. The catalysed reaction is DNA(n) + a 2'-deoxyribonucleoside 5'-triphosphate = DNA(n+1) + diphosphate. Functionally, required for replicative DNA synthesis. This DNA polymerase also exhibits 3' to 5' exonuclease activity. The sequence is that of DNA polymerase III PolC-type from Staphylococcus aureus (strain MSSA476).